Reading from the N-terminus, the 377-residue chain is Putative glutamate--cysteine ligase 2 (377 aa).

Belongs to the glutamate--cysteine ligase type 2 family. YbdK subfamily.

The catalysed reaction is L-cysteine + L-glutamate + ATP = gamma-L-glutamyl-L-cysteine + ADP + phosphate + H(+). Functionally, ATP-dependent carboxylate-amine ligase which exhibits weak glutamate--cysteine ligase activity. In Pseudomonas aeruginosa (strain ATCC 15692 / DSM 22644 / CIP 104116 / JCM 14847 / LMG 12228 / 1C / PRS 101 / PAO1), this protein is Putative glutamate--cysteine ligase 2.